The primary structure comprises 129 residues: Lysozyme C-1 (129 aa).

One can recognise a C-type lysozyme domain in the interval 1-129 (KVFERCELAR…VSSYVEGCTL (129 aa)). 4 disulfides stabilise this stretch: Cys6–Cys127, Cys30–Cys115, Cys65–Cys81, and Cys77–Cys95. Residues Glu35 and Asp53 contribute to the active site.

The protein belongs to the glycosyl hydrolase 22 family. In terms of assembly, monomer.

The enzyme catalyses Hydrolysis of (1-&gt;4)-beta-linkages between N-acetylmuramic acid and N-acetyl-D-glucosamine residues in a peptidoglycan and between N-acetyl-D-glucosamine residues in chitodextrins.. Lysozymes have primarily a bacteriolytic function; those in tissues and body fluids are associated with the monocyte-macrophage system and enhance the activity of immunoagents. This is Lysozyme C-1 from Capra hircus (Goat).